A 334-amino-acid polypeptide reads, in one-letter code: Peroxidase 65 (334 aa).

A signal peptide spans 1 to 28; that stretch reads MSNMQFSRGFNPFVILFCLAVVAPIISA. Intrachain disulfides connect C42-C123, C75-C80, C129-C326, and C208-C236. H73 acts as the Proton acceptor in catalysis. Residues D74, G79, D81, and S83 each coordinate Ca(2+). P171 is a binding site for substrate. N-linked (GlcNAc...) asparagine glycosylation is present at N174. Position 201 (H201) interacts with heme b. A Ca(2+)-binding site is contributed by T202. N238 carries an N-linked (GlcNAc...) asparagine glycan. Ca(2+) contacts are provided by D250, T253, and D258. Residues N282 and N294 are each glycosylated (N-linked (GlcNAc...) asparagine).

Belongs to the peroxidase family. Classical plant (class III) peroxidase subfamily. Heme b serves as cofactor. The cofactor is Ca(2+).

It localises to the secreted. It carries out the reaction 2 a phenolic donor + H2O2 = 2 a phenolic radical donor + 2 H2O. In terms of biological role, removal of H(2)O(2), oxidation of toxic reductants, biosynthesis and degradation of lignin, suberization, auxin catabolism, response to environmental stresses such as wounding, pathogen attack and oxidative stress. These functions might be dependent on each isozyme/isoform in each plant tissue. This chain is Peroxidase 65 (PER65), found in Arabidopsis thaliana (Mouse-ear cress).